The following is a 188-amino-acid chain: Cell division protein SepF (188 aa).

Polar residues predominate over residues 152 to 162; it reads TSHDEASTPTV. The tract at residues 152 to 188 is disordered; the sequence is TSHDEASTPTVVSRDAEAEQQQEAAAAPSPAWGATAL.

Belongs to the SepF family. Homodimer. Interacts with FtsZ.

It is found in the cytoplasm. Functionally, cell division protein that is part of the divisome complex and is recruited early to the Z-ring. Probably stimulates Z-ring formation, perhaps through the cross-linking of FtsZ protofilaments. Its function overlaps with FtsA. This chain is Cell division protein SepF, found in Parasynechococcus marenigrum (strain WH8102).